We begin with the raw amino-acid sequence, 146 residues long: UPF0178 protein BCA_3127 (146 aa).

This sequence belongs to the UPF0178 family.

The polypeptide is UPF0178 protein BCA_3127 (Bacillus cereus (strain 03BB102)).